Reading from the N-terminus, the 258-residue chain is Imidazole glycerol phosphate synthase subunit HisF (258 aa).

Active-site residues include D11 and D130.

Belongs to the HisA/HisF family. Heterodimer of HisH and HisF.

The protein resides in the cytoplasm. It carries out the reaction 5-[(5-phospho-1-deoxy-D-ribulos-1-ylimino)methylamino]-1-(5-phospho-beta-D-ribosyl)imidazole-4-carboxamide + L-glutamine = D-erythro-1-(imidazol-4-yl)glycerol 3-phosphate + 5-amino-1-(5-phospho-beta-D-ribosyl)imidazole-4-carboxamide + L-glutamate + H(+). It functions in the pathway amino-acid biosynthesis; L-histidine biosynthesis; L-histidine from 5-phospho-alpha-D-ribose 1-diphosphate: step 5/9. IGPS catalyzes the conversion of PRFAR and glutamine to IGP, AICAR and glutamate. The HisF subunit catalyzes the cyclization activity that produces IGP and AICAR from PRFAR using the ammonia provided by the HisH subunit. The sequence is that of Imidazole glycerol phosphate synthase subunit HisF from Escherichia coli O6:K15:H31 (strain 536 / UPEC).